The chain runs to 488 residues: Bifunctional protein HldE (488 aa).

The ribokinase stretch occupies residues 1 to 331; it reads MTELSALVER…VALHREDLTL (331 aa). Residue 206–209 participates in ATP binding; sequence NRKE. The active site involves Asp-276. Residues 358–488 are cytidylyltransferase; that stretch reads FTNGCFDLLH…TNTIKKMNGN (131 aa).

In the N-terminal section; belongs to the carbohydrate kinase PfkB family. The protein in the C-terminal section; belongs to the cytidylyltransferase family. In terms of assembly, homodimer.

It catalyses the reaction D-glycero-beta-D-manno-heptose 7-phosphate + ATP = D-glycero-beta-D-manno-heptose 1,7-bisphosphate + ADP + H(+). The catalysed reaction is D-glycero-beta-D-manno-heptose 1-phosphate + ATP + H(+) = ADP-D-glycero-beta-D-manno-heptose + diphosphate. The protein operates within nucleotide-sugar biosynthesis; ADP-L-glycero-beta-D-manno-heptose biosynthesis; ADP-L-glycero-beta-D-manno-heptose from D-glycero-beta-D-manno-heptose 7-phosphate: step 1/4. It functions in the pathway nucleotide-sugar biosynthesis; ADP-L-glycero-beta-D-manno-heptose biosynthesis; ADP-L-glycero-beta-D-manno-heptose from D-glycero-beta-D-manno-heptose 7-phosphate: step 3/4. Catalyzes the phosphorylation of D-glycero-D-manno-heptose 7-phosphate at the C-1 position to selectively form D-glycero-beta-D-manno-heptose-1,7-bisphosphate. Functionally, catalyzes the ADP transfer from ATP to D-glycero-beta-D-manno-heptose 1-phosphate, yielding ADP-D-glycero-beta-D-manno-heptose. This is Bifunctional protein HldE from Paramagnetospirillum magneticum (strain ATCC 700264 / AMB-1) (Magnetospirillum magneticum).